The sequence spans 173 residues: Sterile alpha motif domain-containing protein 5 (173 aa).

Positions 1–65 constitute an SAM domain; sequence MCTNIVYEWL…LEAVRRLREQ (65 aa). A disordered region spans residues 75 to 119; the sequence is TLEPQPAPPGPPADAVPTGRRGEPCGGPAQGTRGDSRGHTTAPRS. The span at 79–88 shows a compositional bias: pro residues; the sequence is QPAPPGPPAD.

In terms of assembly, interacts promiscuously (via SAM domain) with EPHA5, EPHA6, EPHA7, EPHA8, EPHB1, EPHB2, EPHB3 and EPHB4 (via SAM domain) (in vitro). In terms of tissue distribution, detected in biliary epithelial cells on bile ducts at the hepatic hilum (at protein level).

It is found in the cytoplasm. This Homo sapiens (Human) protein is Sterile alpha motif domain-containing protein 5 (SAMD5).